The following is a 724-amino-acid chain: Phosphoribosylformylglycinamidine synthase subunit PurL (724 aa).

His-34 is an active-site residue. Tyr-37 serves as a coordination point for ATP. A Mg(2+)-binding site is contributed by Glu-78. Residues 79–82 (SHNH) and Arg-101 contribute to the substrate site. The active-site Proton acceptor is the His-80. Mg(2+) is bound at residue Asp-102. Position 226 (Gln-226) interacts with substrate. Position 254 (Asp-254) interacts with Mg(2+). 298-300 (ESQ) is a substrate binding site. 2 residues coordinate ATP: Asp-480 and Gly-517. Asn-518 is a Mg(2+) binding site. Ser-520 lines the substrate pocket.

Belongs to the FGAMS family. As to quaternary structure, monomer. Part of the FGAM synthase complex composed of 1 PurL, 1 PurQ and 2 PurS subunits.

It localises to the cytoplasm. The enzyme catalyses N(2)-formyl-N(1)-(5-phospho-beta-D-ribosyl)glycinamide + L-glutamine + ATP + H2O = 2-formamido-N(1)-(5-O-phospho-beta-D-ribosyl)acetamidine + L-glutamate + ADP + phosphate + H(+). The protein operates within purine metabolism; IMP biosynthesis via de novo pathway; 5-amino-1-(5-phospho-D-ribosyl)imidazole from N(2)-formyl-N(1)-(5-phospho-D-ribosyl)glycinamide: step 1/2. Part of the phosphoribosylformylglycinamidine synthase complex involved in the purines biosynthetic pathway. Catalyzes the ATP-dependent conversion of formylglycinamide ribonucleotide (FGAR) and glutamine to yield formylglycinamidine ribonucleotide (FGAM) and glutamate. The FGAM synthase complex is composed of three subunits. PurQ produces an ammonia molecule by converting glutamine to glutamate. PurL transfers the ammonia molecule to FGAR to form FGAM in an ATP-dependent manner. PurS interacts with PurQ and PurL and is thought to assist in the transfer of the ammonia molecule from PurQ to PurL. In Methanopyrus kandleri (strain AV19 / DSM 6324 / JCM 9639 / NBRC 100938), this protein is Phosphoribosylformylglycinamidine synthase subunit PurL.